A 211-amino-acid polypeptide reads, in one-letter code: Dual specificity protein phosphatase 26 (211 aa).

The region spanning 60–207 (NHADEVWPGL…LLALDRRLRQ (148 aa)) is the Tyrosine-protein phosphatase domain. Residue C152 is the Phosphocysteine intermediate of the active site.

This sequence belongs to the protein-tyrosine phosphatase family. Non-receptor class dual specificity subfamily. As to quaternary structure, interacts with HSF4.

The protein resides in the cytoplasm. The protein localises to the nucleus. It is found in the golgi apparatus. The catalysed reaction is O-phospho-L-tyrosyl-[protein] + H2O = L-tyrosyl-[protein] + phosphate. The enzyme catalyses O-phospho-L-seryl-[protein] + H2O = L-seryl-[protein] + phosphate. It catalyses the reaction O-phospho-L-threonyl-[protein] + H2O = L-threonyl-[protein] + phosphate. In terms of biological role, inactivates MAPK1 and MAPK3 which leads to dephosphorylation of heat shock factor protein 4 and a reduction in its DNA-binding activity. In Bos taurus (Bovine), this protein is Dual specificity protein phosphatase 26 (DUSP26).